Consider the following 248-residue polypeptide: Probable septum site-determining protein MinC (248 aa).

A disordered region spans residues 115–144 (PTAVSPPPPPPPPARAEPAPPAARPAPGRM). The span at 118-138 (VSPPPPPPPPARAEPAPPAAR) shows a compositional bias: pro residues.

Belongs to the MinC family. As to quaternary structure, interacts with MinD and FtsZ.

Functionally, cell division inhibitor that blocks the formation of polar Z ring septums. Rapidly oscillates between the poles of the cell to destabilize FtsZ filaments that have formed before they mature into polar Z rings. Prevents FtsZ polymerization. The sequence is that of Probable septum site-determining protein MinC from Xanthomonas euvesicatoria pv. vesicatoria (strain 85-10) (Xanthomonas campestris pv. vesicatoria).